A 194-amino-acid polypeptide reads, in one-letter code: Granulocyte colony-stimulating factor (194 aa).

Residues 1–20 (KLMALQLLLWHSALWMVQEA) form the signal peptide. 2 cysteine pairs are disulfide-bonded: Cys56–Cys62 and Cys84–Cys94. O-linked (GalNAc...) threonine glycosylation is present at Thr153.

Belongs to the IL-6 superfamily. In terms of assembly, monomer. In terms of processing, O-glycosylated.

It localises to the secreted. Functionally, granulocyte/macrophage colony-stimulating factors are cytokines that act in hematopoiesis by controlling the production, differentiation, and function of 2 related white cell populations of the blood, the granulocytes and the monocytes-macrophages. This CSF induces granulocytes. This chain is Granulocyte colony-stimulating factor (CSF3), found in Felis catus (Cat).